Here is a 187-residue protein sequence, read N- to C-terminus: Peptidoglycan-recognition protein 2 (187 aa).

A signal peptide spans 1–19 (MKAFLVALVVAIELTLVFA). Disulfide bonds link Cys-21–Cys-144 and Cys-58–Cys-64. In terms of domain architecture, N-acetylmuramoyl-L-alanine amidase spans 43 to 170 (KPLKYVIIHH…RTVRPTDSPG (128 aa)).

Belongs to the N-acetylmuramoyl-L-alanine amidase 2 family. As to expression, localizes to plasma (at protein level).

The protein localises to the secreted. In terms of biological role, peptidoglycan-recognition protein probably involved in innate immunity by binding to peptidoglycans (PGN) of bacteria and activating the prophenoloxidase (proPO) cascade immune response. Binds to 1,3-beta-D-glucan and PGN. This is Peptidoglycan-recognition protein 2 (PGRP-2) from Holotrichia diomphalia (Korean black chafer).